Here is a 156-residue protein sequence, read N- to C-terminus: Neuroactive polyprotein R15 (156 aa).

A signal peptide spans 1 to 26; the sequence is MDSAGLHINFRLSHVLTVVTCILYIL. Positions 27 to 48 are excised as a propeptide; that stretch reads PPTTTAYSLPAPGKAAFQHQLS. Cysteines 74 and 81 form a disulfide. Gln-120 is subject to Pyrrolidone carboxylic acid.

In terms of tissue distribution, expressed within the abdominal ganglion in neurons R15, RB(HE), the two L9(G) gill motoneurons, and L40 interneuron, all are parts of autonomic control circuit that contributes to implementing a central command to coordinate autonomic activity with escape locomotion.

It is found in the secreted. Its function is as follows. The alpha-1 peptide acts as an osmoregulatory peptide, increasing blood volume, and also modulates the activity of a set of cardiac motor neurons that control heart rate. This is Neuroactive polyprotein R15 from Aplysia californica (California sea hare).